A 780-amino-acid chain; its full sequence is ATPase family gene 2 protein (780 aa).

A compositionally biased stretch (low complexity) spans 1-23 (MAPKSSSSGSKKKSSASSNSADA). Positions 1 to 26 (MAPKSSSSGSKKKSSASSNSADAKAS) are disordered. Residues 286–293 (GPPGTGKT) and 557–564 (GPPGCSKT) each bind ATP.

Belongs to the AAA ATPase family. AFG2 subfamily. In terms of assembly, homohexamer; ATP binding induces oligomerization. Forms a ring-shaped particle of about 12 nm diameter, that displays 6-fold radial symmetry. Associates with cytoplasmic pre-60S ribosomal particles containing ARX1, ALB1, RLP24 and NOG1. Binds to pre-60S ribosomal particles soon after their export from the nucleus and is released before REI1 and LSG1 are incorporated into the particles. Hexameric form interacts with RLP24 (via C-terminal); the interaction recruits AFG2 to pre-60S ribosomal particles and promotes AFG2 ATPase activity and RLP24 release from pre-60S ribosomal particles. Interacts (via N-terminus) with nucleoporin NUP116 (via N-terminus); the interaction is required for RLP24 release from pre-60S ribosomal particles.

The protein resides in the cytoplasm. The enzyme catalyses ATP + H2O = ADP + phosphate + H(+). The hexamer is activated by RLP24 during pre-60S ribosomal particle maturation; RLP24 activates ATPase activity of both ATP-binding regions and increases cooperativity between AFG2 subunits. The second ATP-binding region is inhibited by diazaborine; the inhibition requires prior ATP binding specifically to the second ATP-binding region. Functionally, ATP-dependent chaperone which uses the energy provided by ATP hydrolysis to generate mechanical force to disassemble protein complexes. Plays an essential role in the cytoplasmic maturation steps of pre-60S ribosomal particles by promoting the release of shuttling protein RLP24 from the pre-ribosomal particles. This step facilitates the subsequent release of other shuttling proteins such as NOG1 and allows the transition of the pre-ribosomal particles to later maturation forms that bind REI1. Essential for viability. The polypeptide is ATPase family gene 2 protein (Saccharomyces cerevisiae (strain ATCC 204508 / S288c) (Baker's yeast)).